We begin with the raw amino-acid sequence, 411 residues long: MAPAPKLINWKRNLFVAWLGCFLTGAAFSLIMPFLPLYVETLGVTGHQALNMWSGLVFSITFLFSAIASPFWGGLADRRGRKLMLLRSALGMSIVMLLMGMAQNIWQFLALRAVLGLLGGFIPNANALIATQVPRNRSGWALGTLSTGGVSGALIGPLIGGLLADQYGLRPVFYITAGVLLTCFVLTLLYVKEQFTPVQKKDMLHARQVFAALKSPKLILSLFVTTMIIQIATGSIAPILTLYVRDLAGDIHNLAFVSGLIASVPGVAALMSAPRLGKLGDRIGPERILVFMLIVSVLLLIPMAFVQTPWQLGVLRFLLGAADGALLPAVQTLLIYNCTNQVAGRIFSYNQSFRDIGNVSGPLMGAAVSASYGFRAVFCVTALVVLFNAVYSWWCLQRRPTRMREDTLQEE.

10 helical membrane-spanning segments follow: residues 14 to 34 (LFVA…IMPF), 56 to 76 (LVFS…GGLA), 89 to 109 (ALGM…WQFL), 113 to 133 (AVLG…ATQV), 144 to 164 (TLST…GLLA), 171 to 191 (PVFY…LLYV), 219 to 239 (ILSL…IAPI), 254 to 274 (LAFV…MSAP), 288 to 308 (ILVF…FVQT), and 376 to 396 (AVFC…WWCL).

It belongs to the major facilitator superfamily. DHA1 family. MdtG (TC 2.A.1.2.20) subfamily.

It is found in the cell inner membrane. This chain is Multidrug resistance protein MdtG, found in Serratia proteamaculans (strain 568).